The chain runs to 443 residues: Oxygen-dependent coproporphyrinogen-III oxidase, mitochondrial (443 aa).

The N-terminal 98 residues, 1–98, are a transit peptide targeting the mitochondrion; it reads MALRLGRLGS…EMVPKSSGAR (98 aa). Residues 89 to 112 form a disordered region; sequence EMVPKSSGARSPSPGRREEDGDEL. Ser101 bears the Phosphoserine mark. Positions 103–112 are enriched in basic and acidic residues; that stretch reads GRREEDGDEL. The segment at 182–191 is important for dimerization; the sequence is VLQDGRVFEK. Ser233 lines the coproporphyrinogen III pocket. The active-site Proton donor is the His247. 249–251 is a binding site for coproporphyrinogen III; the sequence is NYR. Residues 381–417 form an important for dimerization region; the sequence is YVEFNLLYDRGTKFGLFTPGSRIESILMSLPLTARWE. An N6-acetyllysine; alternate modification is found at Lys393. Lys393 is modified (N6-succinyllysine; alternate). 400 to 402 contributes to the coproporphyrinogen III binding site; it reads GSR.

This sequence belongs to the aerobic coproporphyrinogen-III oxidase family. Homodimer. In terms of tissue distribution, expressed in erythroid cells. Expressed in liver.

It is found in the mitochondrion intermembrane space. It carries out the reaction coproporphyrinogen III + O2 + 2 H(+) = protoporphyrinogen IX + 2 CO2 + 2 H2O. The protein operates within porphyrin-containing compound metabolism; protoporphyrin-IX biosynthesis; protoporphyrinogen-IX from coproporphyrinogen-III (O2 route): step 1/1. Functionally, involved in the heme biosynthesis. Catalyzes the aerobic oxidative decarboxylation of propionate groups of rings A and B of coproporphyrinogen-III to yield the vinyl groups in protoporphyrinogen-IX. In Mus musculus (Mouse), this protein is Oxygen-dependent coproporphyrinogen-III oxidase, mitochondrial (Cpox).